The primary structure comprises 134 residues: Natriuretic peptides B (134 aa).

Positions M1–S26 are cleaved as a signal peptide. S41 is a glycosylation site (O-linked (Xyl...) (chondroitin sulfate) serine). T62 is a glycosylation site (O-linked (HexNAc...) threonine; Partial). O-linked (HexNAc...) serine glycosylation is found at S63 and S70. An O-linked (HexNAc...) threonine glycan is attached at T74. O-linked (HexNAc...) serine glycosylation occurs at S79. The O-linked (HexNAc...) threonine; Partial glycan is linked to T84. T97 carries O-linked (HexNAc...) threonine glycosylation. C112 and C128 are oxidised to a cystine.

This sequence belongs to the natriuretic peptide family. Post-translationally, the precursor molecule is proteolytically cleaved by the endoproteases FURIN or CORIN at Arg-102 to produce brain natriuretic peptide 32 and NT-proBNP. This likely occurs after it has been secreted into the blood, either during circulation or in the target cells. CORIN also cleaves the precursor molecule at additional residues including Arg-99 and possibly Lys-105. In patients with heart failure, processing and degradation of natriuretic peptides B occurs but is delayed, possibly due to a decrease in enzyme level or activity of CORIN and DPP4. In terms of processing, undergoes further proteolytic cleavage by various proteases such as DPP4, MME and possibly FAP, to give rise to a variety of shorter peptides. Cleaved at Pro-104 by the prolyl endopeptidase FAP (seprase) activity (in vitro). Degraded by IDE. During IDE degradation, the resulting products initially increase the activation of NPR1 and can also stimulate NPR2 to produce cGMP before the fragments are completely degraded and inactivated by IDE (in vitro). O-glycosylated on at least seven residues. In cardiomyocytes, glycosylation at Thr-97 is essential for the stability and processing of the extracellular natriuretic peptides B. Glycosylation, especially at Thr-97, may also be important for brain natriuretic peptide 32 stability and/or extracellular distribution. Glycosylation at Thr-97 appears to inhibit FURIN- or CORIN-mediated proteolytic processing, at least in HEK293 cells. As to expression, detected in the cardiac atria (at protein level). Detected in the kidney distal tubular cells (at protein level).

The protein localises to the secreted. In terms of biological role, cardiac hormone that plays a key role in mediating cardio-renal homeostasis. May also function as a paracrine antifibrotic factor in the heart. Acts by specifically binding and stimulating NPR1 to produce cGMP, which in turn activates effector proteins that drive various biological responses. Involved in regulating the extracellular fluid volume and maintaining the fluid-electrolyte balance through natriuresis, diuresis, vasorelaxation, and inhibition of renin and aldosterone secretion. Binds the clearance receptor NPR3. Functionally, may affect cardio-renal homeostasis. Able to promote the production of cGMP although its potency is very low compared to brain natriuretic peptide 32. Its function is as follows. May have a role in cardio-renal homeostasis. Able to promote the production of cGMP. The polypeptide is Natriuretic peptides B (NPPB) (Homo sapiens (Human)).